Here is a 377-residue protein sequence, read N- to C-terminus: Succinyl-diaminopimelate desuccinylase (377 aa).

Zn(2+) is bound at residue His-67. Asp-69 is an active-site residue. Residue Asp-100 participates in Zn(2+) binding. Residue Glu-134 is the Proton acceptor of the active site. Zn(2+) contacts are provided by Glu-135, Glu-163, and His-349.

The protein belongs to the peptidase M20A family. DapE subfamily. Homodimer. Zn(2+) serves as cofactor. It depends on Co(2+) as a cofactor.

It catalyses the reaction N-succinyl-(2S,6S)-2,6-diaminopimelate + H2O = (2S,6S)-2,6-diaminopimelate + succinate. It functions in the pathway amino-acid biosynthesis; L-lysine biosynthesis via DAP pathway; LL-2,6-diaminopimelate from (S)-tetrahydrodipicolinate (succinylase route): step 3/3. Its function is as follows. Catalyzes the hydrolysis of N-succinyl-L,L-diaminopimelic acid (SDAP), forming succinate and LL-2,6-diaminopimelate (DAP), an intermediate involved in the bacterial biosynthesis of lysine and meso-diaminopimelic acid, an essential component of bacterial cell walls. The protein is Succinyl-diaminopimelate desuccinylase of Glaesserella parasuis serovar 5 (strain SH0165) (Haemophilus parasuis).